The following is a 107-amino-acid chain: HLLQFNKMIKEETGKNAIPFYAFYGCYCGWGGSGKPKDATDRCCFEHDCCYGKLTNCNTKWDIYSYSLKDGYITCGKGTWCEKEVCECDKCLRRNLRTYKYGYMFYL.

Ca(2+)-binding residues include Y27, G29, and G31. 5 cysteine pairs are disulfide-bonded: C28–C44, C43–C91, C50–C88, C57–C81, and C75–C86. H47 is an active-site residue. Residue D48 participates in Ca(2+) binding. D89 is an active-site residue.

The protein belongs to the phospholipase A2 family. Group II subfamily. D49 sub-subfamily. As to quaternary structure, heterodimer of A and B chains; non-covalently linked. The acidic protein (B chain) has phospholipase A2 activity and the A chain weakly inhibits the B chain enzymatic activity but potentiates its lethal potency. As to expression, expressed by the venom gland.

It is found in the secreted. The enzyme catalyses a 1,2-diacyl-sn-glycero-3-phosphocholine + H2O = a 1-acyl-sn-glycero-3-phosphocholine + a fatty acid + H(+). Heterodimer A-B: Sphenotoxin is a potent neurotoxin that possesses phospholipase A2 (PLA2) activity. It consists of a non-covalent association of a basic PLA2 subunit B with a non-enzymatic subunit A. Its function is as follows. Monomer B: Not found in vivo. In vitro, potent neurotoxin that possesses phospholipase A2 (PLA2) activity and exerts a lethal action by blocking neuromuscular transmission. Induces paralysis of the hind legs and neuromuscular blockade in mouse phrenic nerve-diaphragm preparations. PLA2 catalyzes the calcium-dependent hydrolysis of the 2-acyl groups in 3-sn-phosphoglycerides. The sequence is that of Basic phospholipase A2 sphenotoxin subunit B from Ophryacus sphenophrys (Broad-horned pitviper).